A 158-amino-acid polypeptide reads, in one-letter code: Low molecular weight phosphotyrosine protein phosphatase (158 aa).

Ala-2 is modified (N-acetylalanine). Cys-13 functions as the Nucleophile in the catalytic mechanism. Arg-19 is an active-site residue. Catalysis depends on Asp-130, which acts as the Proton donor. A phosphotyrosine mark is found at Tyr-132 and Tyr-133.

Belongs to the low molecular weight phosphotyrosine protein phosphatase family.

It localises to the cytoplasm. The catalysed reaction is O-phospho-L-tyrosyl-[protein] + H2O = L-tyrosyl-[protein] + phosphate. The enzyme catalyses a phosphate monoester + H2O = an alcohol + phosphate. In terms of biological role, acts on tyrosine phosphorylated proteins, low-MW aryl phosphates and natural and synthetic acyl phosphates. This chain is Low molecular weight phosphotyrosine protein phosphatase (ACP1), found in Gallus gallus (Chicken).